The chain runs to 104 residues: Large ribosomal subunit protein uL24 (104 aa).

It belongs to the universal ribosomal protein uL24 family. In terms of assembly, part of the 50S ribosomal subunit.

In terms of biological role, one of two assembly initiator proteins, it binds directly to the 5'-end of the 23S rRNA, where it nucleates assembly of the 50S subunit. Functionally, one of the proteins that surrounds the polypeptide exit tunnel on the outside of the subunit. In Methylobacterium radiotolerans (strain ATCC 27329 / DSM 1819 / JCM 2831 / NBRC 15690 / NCIMB 10815 / 0-1), this protein is Large ribosomal subunit protein uL24.